Reading from the N-terminus, the 310-residue chain is p-hydroxybenzoic acid efflux pump subunit AaeA (310 aa).

The helical transmembrane segment at 12 to 32 threads the bilayer; that stretch reads AITVVLVILAFIAIFNAWVYY.

It belongs to the membrane fusion protein (MFP) (TC 8.A.1) family.

The protein resides in the cell inner membrane. Functionally, forms an efflux pump with AaeB. In Escherichia coli O9:H4 (strain HS), this protein is p-hydroxybenzoic acid efflux pump subunit AaeA.